The primary structure comprises 240 residues: MELTWFGHSTWRVTVGTTDLLVDPFFDNPHTDTAPSEVAVDHVLLTHGHADHIAHVGAFADTHTVGTPEVTGYVADETGVEDTTGMNLGGTVELGDAFVTMVRADHTNGLETGYEYSGGTPVGYVISDAAPTQTGDGDATTFYHAGDTSLQSEMKDVIGPYLDPDAAAVPVGDHFTMGPMQAAVAVDWLDVDVAFPMHYDTFPPIEVDTADFEREVNATGSQADVHVLDGDETVDLSDAL.

Belongs to the UPF0173 family.

The sequence is that of UPF0173 metal-dependent hydrolase OE_2513F from Halobacterium salinarum (strain ATCC 29341 / DSM 671 / R1).